The sequence spans 74 residues: O-conotoxin GeXXXIA (74 aa).

Residues 1–22 (MKLTCVLIITVLFLTACQLTTA) form the signal peptide. Residues 23–33 (VTYSRGEHKHR) constitute a propeptide that is removed on maturation.

It belongs to the conotoxin O1 superfamily. As to quaternary structure, homodimer; disulfide-linked. May contain 2 intrachain disulfide bonds and probably one interchain disulfide bond forming the homodimer. Post-translationally, the disulfide pairing is not important for activity towards the different nAChR subtypes, since this peptide without disulfide bond or with different disulfide bonds shows the same activity. Expressed by the venom duct.

It localises to the secreted. Functionally, the activity of this natural homodimer has not been tested due to low abundance. The synthetic linear peptide has been refolded, giving 4 different monomeric isomers (m1 to m4) with 2 disulfide bonds each. All isomers potently inhibit rat alpha-1-beta-1-delta-epsilon/CHRNA1-CHRNB1-CHRND-CHRNE and human alpha-9-alpha-10/CHRNA9-CHRNA10 nicotinic acetylcholine receptors (nAChR). In addition, they show a modest inhibition at human alpha-3-beta-2/CHRNA3-CHRNB2, alpha-3-beta-4/CHRNA3-CHRNB4, alpha-7/CHRNA7, and alpha-4-beta-4/CHRNA4-CHRNB4. The synthetic monomer peptide without disulfide bonds shows a potent activity on alpha-9-alpha-10/CHRNA9 and CHRNA10 (IC(50)=16.2 nM). This linear peptide does not act as a competitive antagonist, or as a channel pore blocker of nAChR. This Conus generalis (General cone) protein is O-conotoxin GeXXXIA.